Consider the following 284-residue polypeptide: Elongation factor Ts (284 aa).

Residues 80 to 83 (TDFV) are involved in Mg(2+) ion dislocation from EF-Tu.

The protein belongs to the EF-Ts family.

It localises to the cytoplasm. Associates with the EF-Tu.GDP complex and induces the exchange of GDP to GTP. It remains bound to the aminoacyl-tRNA.EF-Tu.GTP complex up to the GTP hydrolysis stage on the ribosome. The protein is Elongation factor Ts of Photobacterium profundum (strain SS9).